A 409-amino-acid chain; its full sequence is tRNA(Met) cytidine acetate ligase (409 aa).

Residues 7-20, Gly-102, Asn-169, and Arg-194 each bind ATP; that span reads VVEY…HLHH.

Belongs to the TmcAL family.

Its subcellular location is the cytoplasm. The enzyme catalyses cytidine(34) in elongator tRNA(Met) + acetate + ATP = N(4)-acetylcytidine(34) in elongator tRNA(Met) + AMP + diphosphate. Functionally, catalyzes the formation of N(4)-acetylcytidine (ac(4)C) at the wobble position of elongator tRNA(Met), using acetate and ATP as substrates. First activates an acetate ion to form acetyladenylate (Ac-AMP) and then transfers the acetyl group to tRNA to form ac(4)C34. The polypeptide is tRNA(Met) cytidine acetate ligase (Clostridium botulinum (strain Loch Maree / Type A3)).